A 280-amino-acid polypeptide reads, in one-letter code: Large ribosomal subunit protein uL2 (280 aa).

Disordered stretches follow at residues 1–58 (MAIR…GGGH) and 226–280 (MNPV…KHGR). 2 stretches are compositionally biased toward basic residues: residues 37–58 (LHGH…GGGH) and 268–280 (IVRR…KHGR).

This sequence belongs to the universal ribosomal protein uL2 family. Part of the 50S ribosomal subunit. Forms a bridge to the 30S subunit in the 70S ribosome.

In terms of biological role, one of the primary rRNA binding proteins. Required for association of the 30S and 50S subunits to form the 70S ribosome, for tRNA binding and peptide bond formation. It has been suggested to have peptidyltransferase activity; this is somewhat controversial. Makes several contacts with the 16S rRNA in the 70S ribosome. The polypeptide is Large ribosomal subunit protein uL2 (Mycobacterium avium (strain 104)).